The following is a 342-amino-acid chain: Biotin synthase (342 aa).

Residues 36 to 260 enclose the Radical SAM core domain; the sequence is NRIQISTLLS…MMPKSYIRLS (225 aa). The [4Fe-4S] cluster site is built by cysteine 51, cysteine 55, and cysteine 58. Residues cysteine 95, cysteine 126, cysteine 186, and arginine 258 each contribute to the [2Fe-2S] cluster site.

It belongs to the radical SAM superfamily. Biotin synthase family. Homodimer. The cofactor is [4Fe-4S] cluster. Requires [2Fe-2S] cluster as cofactor.

The enzyme catalyses (4R,5S)-dethiobiotin + (sulfur carrier)-SH + 2 reduced [2Fe-2S]-[ferredoxin] + 2 S-adenosyl-L-methionine = (sulfur carrier)-H + biotin + 2 5'-deoxyadenosine + 2 L-methionine + 2 oxidized [2Fe-2S]-[ferredoxin]. It functions in the pathway cofactor biosynthesis; biotin biosynthesis; biotin from 7,8-diaminononanoate: step 2/2. In terms of biological role, catalyzes the conversion of dethiobiotin (DTB) to biotin by the insertion of a sulfur atom into dethiobiotin via a radical-based mechanism. The sequence is that of Biotin synthase from Buchnera aphidicola subsp. Schizaphis graminum (strain Sg).